A 317-amino-acid chain; its full sequence is MEAETECKVPGVYSETGIPVEDPAPGLNSDVSKKDAPPAVAAPGPGLYFEIGKKARDLLYKDFHTDQKFTLTTYTNNGVVITAASTMKDEAIFSEIQTKLKSNNVMLDVKATSDSQVLTTITTEDLGVSGLKQIVSLPFPYQTAGKAELQYLHDYAGISLGVGLTSKPLVNLSGVFGNKSVAVGADVAVDTSTGDFTKYDAGLTINNSDLAADLTLNNKGDSLTASYYHLVNKESGTAAGAELTHSFSTKENTLSFGMQHALDPLTTVKARYNNHGMVSALIQHEWRPKSFLTLSAEVDTKAIDKASKVGLSLVLKP.

The disordered stretch occupies residues Met1 to Asp30.

It belongs to the eukaryotic mitochondrial porin (TC 1.B.8.1) family.

The protein localises to the mitochondrion outer membrane. Forms a channel through the mitochondrial outer membrane that allows diffusion of small hydrophilic molecules. The channel adopts an open conformation at low or zero membrane potential and a closed conformation at potentials above 30-40 mV. The open state has a weak anion selectivity whereas the closed state is cation-selective. The chain is Mitochondrial outer membrane protein porin 4 (VDAC4) from Oryza sativa subsp. japonica (Rice).